Reading from the N-terminus, the 417-residue chain is Inner membrane transport protein YnfM (417 aa).

The segment at 1 to 22 (MSRTTTVDGAPASDTDKQSISQ) is disordered. The Periplasmic portion of the chain corresponds to 1 to 38 (MSRTTTVDGAPASDTDKQSISQPNQFIKRGTPQFMRVT). A helical transmembrane segment spans residues 39–59 (LALFSAGLATFALLYCVQPIL). Topologically, residues 60–73 (PVLSQEFGLTPANS) are cytoplasmic. Residues 74 to 94 (SISLSISTAMLAIGLLFTGPL) traverse the membrane as a helical segment. The Periplasmic portion of the chain corresponds to 95–101 (SDAIGRK). Residues 102–122 (PVMVTALLLASICTLLSTMMT) form a helical membrane-spanning segment. Over 123–125 (SWH) the chain is Cytoplasmic. Residues 126 to 146 (GILIMRALIGLSLSGVAAVGM) traverse the membrane as a helical segment. At 147–152 (TYLSEE) the chain is on the periplasmic side. The helical transmembrane segment at 153 to 173 (IHPSFVAFSMGLYISGNSIGG) threads the bilayer. At 174–190 (MSGRLISGVFTDFFNWR) the chain is on the cytoplasmic side. Residues 191–211 (IALAAIGCFALASALMFWKIL) traverse the membrane as a helical segment. At 212–241 (PESRHFRPTSLRPKTLFINFRLHWRDRGLP) the chain is on the periplasmic side. Residues 242–262 (LLFAEGFLLMGSFVTLFNYIG) traverse the membrane as a helical segment. The Cytoplasmic portion of the chain corresponds to 263-264 (YR). A helical transmembrane segment spans residues 265-285 (LMLSPWHVSQAVVGLLSLAYL). Topologically, residues 286 to 315 (TGTWSSPKAGTMTTRYGRGPVMLFSTGVML) are periplasmic. The helical transmembrane segment at 316-336 (FGLLMTLFSSLWLIFAGMLLF) threads the bilayer. Over 337–364 (SAGFFAAHSVASSWIGPRAKRAKGQASS) the chain is Cytoplasmic. Residues 365–385 (LYLFSYYLGSSIAGTLGGVFW) form a helical membrane-spanning segment. Topologically, residues 386-387 (HN) are periplasmic. The helical transmembrane segment at 388-408 (YGWNGVGAFIALMLVIALLVG) threads the bilayer. Over 409–417 (TRLHRRLHA) the chain is Cytoplasmic.

The protein belongs to the major facilitator superfamily.

Its subcellular location is the cell inner membrane. This Escherichia coli (strain K12) protein is Inner membrane transport protein YnfM (ynfM).